Here is a 187-residue protein sequence, read N- to C-terminus: Elongation factor P (187 aa).

Belongs to the elongation factor P family.

The protein localises to the cytoplasm. It participates in protein biosynthesis; polypeptide chain elongation. In terms of biological role, involved in peptide bond synthesis. Stimulates efficient translation and peptide-bond synthesis on native or reconstituted 70S ribosomes in vitro. Probably functions indirectly by altering the affinity of the ribosome for aminoacyl-tRNA, thus increasing their reactivity as acceptors for peptidyl transferase. The polypeptide is Elongation factor P (Corynebacterium jeikeium (strain K411)).